The primary structure comprises 123 residues: uncharacterized protein (123 aa).

The tract at residues 1–28 (MGLGSSKRKEEPPHKSEPKTVGRVKRAG) is disordered. Residues 7 to 20 (KRKEEPPHKSEPKT) are compositionally biased toward basic and acidic residues.

This sequence belongs to the TUSC2 family.

This is an uncharacterized protein from Caenorhabditis elegans.